Consider the following 361-residue polypeptide: S-adenosylmethionine:tRNA ribosyltransferase-isomerase (361 aa).

Belongs to the QueA family. Monomer.

Its subcellular location is the cytoplasm. It catalyses the reaction 7-aminomethyl-7-carbaguanosine(34) in tRNA + S-adenosyl-L-methionine = epoxyqueuosine(34) in tRNA + adenine + L-methionine + 2 H(+). It functions in the pathway tRNA modification; tRNA-queuosine biosynthesis. Functionally, transfers and isomerizes the ribose moiety from AdoMet to the 7-aminomethyl group of 7-deazaguanine (preQ1-tRNA) to give epoxyqueuosine (oQ-tRNA). The sequence is that of S-adenosylmethionine:tRNA ribosyltransferase-isomerase from Actinobacillus pleuropneumoniae serotype 5b (strain L20).